The following is a 190-amino-acid chain: Signal peptidase complex subunit 3 (190 aa).

Residues 1–9 (MFNIVTRFQ) are Cytoplasmic-facing. Residues 10–32 (YAANQALTSSIIIAGIVIVSSLL) form a helical; Signal-anchor for type II membrane protein membrane-spanning segment. Residues 33–190 (QLYSNNAWSL…EYVDKKKEQK (158 aa)) are Lumenal-facing.

It belongs to the SPCS3 family. Component of the signal peptidase complex (SPC) composed of a catalytic subunit SEC11 and three accessory subunits SPC1, SPC2 and SPC3. The complex induces a local thinning of the ER membrane which is used to measure the length of the signal peptide (SP) h-region of protein substrates. This ensures the selectivity of the complex towards h-regions shorter than 18-20 amino acids. SPC associates with the translocon complex.

The protein resides in the endoplasmic reticulum membrane. In terms of biological role, essential component of the signal peptidase complex (SPC) which catalyzes the cleavage of N-terminal signal sequences from nascent proteins as they are translocated into the lumen of the endoplasmic reticulum. Essential for the SPC catalytic activity, possibly by stabilizing and positioning the active center of the complex close to the lumenal surface. Essential for viability. In Debaryomyces hansenii (strain ATCC 36239 / CBS 767 / BCRC 21394 / JCM 1990 / NBRC 0083 / IGC 2968) (Yeast), this protein is Signal peptidase complex subunit 3 (SPC3).